We begin with the raw amino-acid sequence, 1158 residues long: MTLHAYLGRAGTGKSTKMLTEIKQKMKADPLGDPIILIAPTQSTFQLEQAFVNDPELNGSLRTEVLHFERLSHRIFQEVGSYSEQKLSKAATEMMIYNIVQEQQKYLKLYQSQAKYYGFSEKLTEQIQDFKKYAVTPEHLEHFIADKNMQTRTKNKLEDIALIYREFEQRIQNEFITGEDSLQYFIDCMPKSEWLKRADIYIDGFHNFSTIEYLIIKGLIKYAKSVTIILTTDGNHDQFSLFRKPSEVLRHIEEIANELNISIERQYFNQLYRFNNQDLKHLEQEFDALQINRVACQGHINILESATMREEINEIARRIIVDIRDKQLRYQDIAILYRDESYAYLFDSILPLYNIPYNIDTKRSMTHHPVMEMIRSLIEVIQSNWQVNPMLRLLKTDVLTASYLKSAYLVDLLENFVLERGIYGKRWLDDELFNVEHFSKMGRKAHKLTEDERNTFEQVVKLKKDVIDKILHFEKQMSQAETVKDFATAFYESMEYFELPNQLMTERDELDLNGNHEKAEEIDQIWNGLIQILDDLVLVFGDEPMSMERFLEVFDIGLEQLEFVMIPQTLDQVSIGTMDLAKVDNKQHVYLVGMNDGTMPQPVTASSLITDEEKKYFEQQANVELSPTSDILQMDEAFVCYVAMTRAKGDVTFSYSLMGSSGDDKEISPFLNQIQSLFNQLEITNIPQYHEVNPLSLMQHAKQTKITLFEALRAWLYDEIVADSWLDAYQVIRDSDHLNQGLDYLMSALTFDNETVKLGETLSKDLYGKEINASVSRFEGYQQCPFKHYASHGLKLNERTKYELQNFDLGDIFHSVLKYISERINGDFKQLDLKKIRQLTNEALEEILPKVQFNLLNSSAYYRYLSRRIGAIVETTLSALKYQGTYSKFMPKHFETSFRRKPRTNDELIAQTLTTTQGIPINIRGQIDRIDTYTKNDTSFVNIIDYKSSEGSATLDLTKVYYGMQMQMMTYMDIVLQNKQRLGLTDIVKPGGLLYFHVHEPRIKFKSWSDIDEDKLEQDLIKKFKLSGLVNADQTVIDALDIRLEPKFTSDIVPVGLNKDGSLSKRGSQVADEATIYKFIQHNKENFIETASNIMDGHTEVAPLKYKQKLPCAFCSYQSVCHVDGMIDSKRYRTVDETINPIEAIQNININDEFGGEQ.

A UvrD-like helicase ATP-binding domain is found at 1-275; that stretch reads MTLHAYLGRA…QYFNQLYRFN (275 aa). Position 8-15 (8-15) interacts with ATP; it reads GRAGTGKS. The UvrD-like helicase C-terminal domain occupies 269–583; it reads NQLYRFNNQD…SIGTMDLAKV (315 aa). Cysteine 784, cysteine 1112, cysteine 1115, and cysteine 1121 together coordinate [4Fe-4S] cluster.

Belongs to the helicase family. AddB/RexB type 1 subfamily. Heterodimer of AddA and AddB. It depends on Mg(2+) as a cofactor. Requires [4Fe-4S] cluster as cofactor.

The heterodimer acts as both an ATP-dependent DNA helicase and an ATP-dependent, dual-direction single-stranded exonuclease. Recognizes the chi site generating a DNA molecule suitable for the initiation of homologous recombination. The AddB subunit has 5' -&gt; 3' nuclease activity but not helicase activity. This chain is ATP-dependent helicase/deoxyribonuclease subunit B, found in Staphylococcus aureus (strain USA300).